Here is a 561-residue protein sequence, read N- to C-terminus: Microtubule-associated protein VP6 (561 aa).

As to quaternary structure, interacts with VP2.

The protein resides in the virion. Its subcellular location is the host cytoplasm. The protein localises to the host cytoskeleton. Functionally, minor inner capsid component. Displays NTPase and RNA 5'-triphosphatase (RTPase) activities. May function as a cofactor of polymerase VP2. Associates with microtubules and plays a role in the formation, structural organization and morphology of viral inclusions, where the assembly of cores and the replication of viral RNA occur. The sequence is that of Microtubule-associated protein VP6 (S6) from Lymantria dispar cypovirus 1 (isolate Rao) (LdCPV-1).